We begin with the raw amino-acid sequence, 278 residues long: Inosose isomerase (278 aa).

Positions 142, 174, 200, and 246 each coordinate a divalent metal cation.

It belongs to the IolI family. Mn(2+) serves as cofactor. The cofactor is Fe(2+). Co(2+) is required as a cofactor.

It catalyses the reaction scyllo-inosose = scyllo-inosine. It functions in the pathway polyol metabolism; myo-inositol degradation into acetyl-CoA. In terms of biological role, involved in the reversible interconverion of 2-keto-myo-inositol (2KMI, inosose or 2,4,6/3,5-pentahydroxycyclohexanone) to 1-keto-D-chiro-inositol (1KDCI or 2,3,5/4,6-pentahydroxycyclohexanone). In Bacillus subtilis (strain 168), this protein is Inosose isomerase (iolI).